A 205-amino-acid chain; its full sequence is Cerebellin-3 (205 aa).

The signal sequence occupies residues 1–32 (MLGAKPHWLPGPLHSPGLPLVLVLLALGAGWA). A C1q domain is found at 67-205 (APPGRVAFAA…SFSGFLIFPL (139 aa)). A necessary for interaction with CBLN3, and homotrimerization region spans residues 72-205 (VAFAAVRSHH…SFSGFLIFPL (134 aa)). N-linked (GlcNAc...) asparagine glycosylation is present at Asn-90.

As to quaternary structure, heterohexamer; disulfide-linked heterotrimers. Interacts with CBLN1. May also form oligomers with CBLN2 and CBLN4.

Its subcellular location is the endoplasmic reticulum. It is found in the golgi apparatus. The protein localises to the cis-Golgi network. The protein resides in the secreted. It localises to the synapse. Functionally, may be involved in synaptic functions in the CNS. The protein is Cerebellin-3 (CBLN3) of Homo sapiens (Human).